Consider the following 107-residue polypeptide: Iron-binding protein IscA (107 aa).

C35, C99, and C101 together coordinate Fe cation.

It belongs to the HesB/IscA family. Homodimer; may form tetramers and higher multimers. It depends on Fe cation as a cofactor.

Its function is as follows. Is able to transfer iron-sulfur clusters to apo-ferredoxin. Multiple cycles of [2Fe2S] cluster formation and transfer are observed, suggesting that IscA acts catalytically. Recruits intracellular free iron so as to provide iron for the assembly of transient iron-sulfur cluster in IscU in the presence of IscS, L-cysteine and the thioredoxin reductase system TrxA/TrxB. This is Iron-binding protein IscA from Yersinia pestis bv. Antiqua (strain Angola).